A 153-amino-acid chain; its full sequence is Partner of bursicon (153 aa).

A signal peptide spans Met1–Ala35. Disulfide bonds link Cys44-Cys102, Cys68-Cys117, Cys77-Cys143, Cys81-Cys145, and Cys99-Cys148. Positions Cys44–Glu139 constitute a CTCK domain.

In terms of assembly, heterodimer of burs and pburs.

It localises to the secreted. Functionally, final heterodimeric neurohormone released at the end of the molting cycle, involved in the sclerotization (tanning) of the insect cuticle, melanization and wing spreading. The polypeptide is Partner of bursicon (Anopheles gambiae (African malaria mosquito)).